A 565-amino-acid polypeptide reads, in one-letter code: NAD-dependent malic enzyme (565 aa).

The Proton donor role is filled by Tyr-104. Arg-157 contributes to the NAD(+) binding site. Residue Lys-175 is the Proton acceptor of the active site. 3 residues coordinate a divalent metal cation: Glu-246, Asp-247, and Asp-270. NAD(+) is bound by residues Asp-270 and Asn-418.

This sequence belongs to the malic enzymes family. As to quaternary structure, homotetramer. Mg(2+) is required as a cofactor. The cofactor is Mn(2+).

The catalysed reaction is (S)-malate + NAD(+) = pyruvate + CO2 + NADH. It catalyses the reaction oxaloacetate + H(+) = pyruvate + CO2. The chain is NAD-dependent malic enzyme from Yersinia enterocolitica serotype O:8 / biotype 1B (strain NCTC 13174 / 8081).